The sequence spans 524 residues: Peptide chain release factor 3 (524 aa).

A tr-type G domain is found at 9 to 275; that stretch reads SRRRTFAIIS…AVVDLSPPPI (267 aa). GTP is bound by residues 18 to 25, 86 to 90, and 140 to 143; these read SHPDAGKT, DTPGH, and NKLD.

This sequence belongs to the TRAFAC class translation factor GTPase superfamily. Classic translation factor GTPase family. PrfC subfamily.

It localises to the cytoplasm. Functionally, increases the formation of ribosomal termination complexes and stimulates activities of RF-1 and RF-2. It binds guanine nucleotides and has strong preference for UGA stop codons. It may interact directly with the ribosome. The stimulation of RF-1 and RF-2 is significantly reduced by GTP and GDP, but not by GMP. This Dechloromonas aromatica (strain RCB) protein is Peptide chain release factor 3.